The following is a 438-amino-acid chain: Glutamyl-tRNA reductase (438 aa).

Substrate-binding positions include 49-52 (TCNR), serine 109, 114-116 (EQQ), and glutamine 120. Catalysis depends on cysteine 50, which acts as the Nucleophile. 191–196 (GAGAMA) contributes to the NADP(+) binding site.

It belongs to the glutamyl-tRNA reductase family. As to quaternary structure, homodimer.

The enzyme catalyses (S)-4-amino-5-oxopentanoate + tRNA(Glu) + NADP(+) = L-glutamyl-tRNA(Glu) + NADPH + H(+). The protein operates within porphyrin-containing compound metabolism; protoporphyrin-IX biosynthesis; 5-aminolevulinate from L-glutamyl-tRNA(Glu): step 1/2. Catalyzes the NADPH-dependent reduction of glutamyl-tRNA(Glu) to glutamate 1-semialdehyde (GSA). This Corynebacterium diphtheriae (strain ATCC 700971 / NCTC 13129 / Biotype gravis) protein is Glutamyl-tRNA reductase.